Reading from the N-terminus, the 254-residue chain is 5'-nucleotidase SurE (254 aa).

Residues D8, D9, S39, and N91 each coordinate a divalent metal cation.

This sequence belongs to the SurE nucleotidase family. The cofactor is a divalent metal cation.

It is found in the cytoplasm. It catalyses the reaction a ribonucleoside 5'-phosphate + H2O = a ribonucleoside + phosphate. Functionally, nucleotidase that shows phosphatase activity on nucleoside 5'-monophosphates. The sequence is that of 5'-nucleotidase SurE from Methylibium petroleiphilum (strain ATCC BAA-1232 / LMG 22953 / PM1).